Consider the following 116-residue polypeptide: Iron-sulfur cluster insertion protein ErpA (116 aa).

Iron-sulfur cluster-binding residues include Cys-44, Cys-108, and Cys-110.

Belongs to the HesB/IscA family. Homodimer. Iron-sulfur cluster serves as cofactor.

Required for insertion of 4Fe-4S clusters for at least IspG. The chain is Iron-sulfur cluster insertion protein ErpA from Shewanella oneidensis (strain ATCC 700550 / JCM 31522 / CIP 106686 / LMG 19005 / NCIMB 14063 / MR-1).